The chain runs to 296 residues: Pyridoxine/pyridoxal/pyridoxamine kinase (296 aa).

2 residues coordinate substrate: serine 23 and histidine 59. ATP is bound at residue aspartate 125. Tyrosine 136 is a binding site for Mg(2+). ATP contacts are provided by residues threonine 157, glutamate 162, threonine 195, 222-225, and threonine 232; that span reads HQRV. Residue glutamate 162 coordinates Mg(2+). Aspartate 234 lines the substrate pocket.

Belongs to the pyridoxine kinase family. PdxK subfamily. As to quaternary structure, homodimer. Mg(2+) serves as cofactor.

It carries out the reaction pyridoxal + ATP = pyridoxal 5'-phosphate + ADP + H(+). The enzyme catalyses pyridoxine + ATP = pyridoxine 5'-phosphate + ADP + H(+). The catalysed reaction is pyridoxamine + ATP = pyridoxamine 5'-phosphate + ADP + H(+). Its pathway is cofactor metabolism; pyridoxal 5'-phosphate salvage; pyridoxal 5'-phosphate from pyridoxal: step 1/1. It participates in cofactor metabolism; pyridoxal 5'-phosphate salvage; pyridoxine 5'-phosphate from pyridoxine: step 1/1. The protein operates within cofactor metabolism; pyridoxal 5'-phosphate salvage; pyridoxamine 5'-phosphate from pyridoxamine: step 1/1. In terms of biological role, B6-vitamer kinase involved in the salvage pathway of pyridoxal 5'-phosphate (PLP). Catalyzes the phosphorylation of pyridoxine (PN), pyridoxal (PL), and pyridoxamine (PM), forming their respective 5'-phosphorylated esters, i.e. PNP, PLP and PMP. The sequence is that of Pyridoxine/pyridoxal/pyridoxamine kinase from Bordetella avium (strain 197N).